Reading from the N-terminus, the 153-residue chain is MKAVVQRVSRASVRVSGETVGEIGPGLAVLLGVAEGDTEEDAEYLASKIINLRIFSDAEGKFNLSLKDLCREMLVVSQFTLIADTRKGRRPSFIEAAQPQEADGLYNVFIRLCREEGTQVATGQFGAMMMLEIYNDGPVTIILDSRDRLNPRL.

Positions 137 to 138 match the Gly-cisPro motif, important for rejection of L-amino acids motif; that stretch reads GP.

Belongs to the DTD family. Homodimer.

It localises to the cytoplasm. The enzyme catalyses glycyl-tRNA(Ala) + H2O = tRNA(Ala) + glycine + H(+). The catalysed reaction is a D-aminoacyl-tRNA + H2O = a tRNA + a D-alpha-amino acid + H(+). Functionally, an aminoacyl-tRNA editing enzyme that deacylates mischarged D-aminoacyl-tRNAs. Also deacylates mischarged glycyl-tRNA(Ala), protecting cells against glycine mischarging by AlaRS. Acts via tRNA-based rather than protein-based catalysis; rejects L-amino acids rather than detecting D-amino acids in the active site. By recycling D-aminoacyl-tRNA to D-amino acids and free tRNA molecules, this enzyme counteracts the toxicity associated with the formation of D-aminoacyl-tRNA entities in vivo and helps enforce protein L-homochirality. The polypeptide is D-aminoacyl-tRNA deacylase (Dehalococcoides mccartyi (strain ATCC BAA-2100 / JCM 16839 / KCTC 5957 / BAV1)).